The following is a 911-amino-acid chain: Eukaryotic translation initiation factor 3 subunit C (911 aa).

A disordered region spans residues 1-44; it reads MSRFFTTGSDSESESSLSGEELVTKPVSGNYGKQPLLLSEDEED. The segment covering 8–21 has biased composition (low complexity); the sequence is GSDSESESSLSGEE. Phosphoserine occurs at positions 9, 11, 13, 15, 16, 18, and 39. Lys99 bears the N6-acetyllysine mark. 2 disordered regions span residues 157–299 and 520–540; these read TNYK…GGEW and QLTP…NEGE. A phosphoserine mark is found at Ser166, Ser178, Ser181, and Ser182. Residues 166–190 show a composition bias toward acidic residues; that stretch reads SADEDAEKNEEDSEGSSDEDEDEDG. Basic and acidic residues predominate over residues 199–208; sequence KKQESSGESR. Residues 216–230 are compositionally biased toward acidic residues; it reads DDDEDSEDSEDEEWD. Residues 259–276 are compositionally biased toward basic and acidic residues; that stretch reads PTTEEDKKAAEKKREDKA. A compositionally biased stretch (polar residues) spans 520 to 529; sequence QLTPPEGSSK. A Phosphothreonine modification is found at Thr522. Position 641 is an N6-acetyllysine (Lys641). One can recognise a PCI domain in the interval 671–847; sequence FHLHINLELL…QTVVMHRTEP (177 aa). Positions 883-911 are disordered; the sequence is FRDQKDGYRKNEGYMRRGGYRQQQSQTAY. The segment covering 884-897 has biased composition (basic and acidic residues); sequence RDQKDGYRKNEGYM. At Ser907 the chain carries Phosphoserine.

It belongs to the eIF-3 subunit C family. As to quaternary structure, component of the eukaryotic translation initiation factor 3 (eIF-3) complex, which is composed of 13 subunits: EIF3A, EIF3B, EIF3C, EIF3D, EIF3E, EIF3F, EIF3G, EIF3H, EIF3I, EIF3J, EIF3K, EIF3L and EIF3M. The eIF-3 complex appears to include 3 stable modules: module A is composed of EIF3A, EIF3B, EIF3G and EIF3I; module B is composed of EIF3F, EIF3H, and EIF3M; and module C is composed of EIF3C, EIF3D, EIF3E, EIF3K and EIF3L. EIF3C of module C binds EIF3B of module A and EIF3H of module B, thereby linking the three modules. EIF3J is a labile subunit that binds to the eIF-3 complex via EIF3B. The eIF-3 complex may interact with RPS6KB1 under conditions of nutrient depletion. Mitogenic stimulation may lead to binding and activation of a complex composed of MTOR and RPTOR, leading to phosphorylation and release of RPS6KB1 and binding of EIF4B to eIF-3. Interacts with ALKBH4, IFIT1 and IFIT2. Interacts with BZW2/5MP1. Phosphorylated. Phosphorylation is enhanced upon serum stimulation.

It is found in the cytoplasm. In terms of biological role, component of the eukaryotic translation initiation factor 3 (eIF-3) complex, which is required for several steps in the initiation of protein synthesis. The eIF-3 complex associates with the 40S ribosome and facilitates the recruitment of eIF-1, eIF-1A, eIF-2:GTP:methionyl-tRNAi and eIF-5 to form the 43S pre-initiation complex (43S PIC). The eIF-3 complex stimulates mRNA recruitment to the 43S PIC and scanning of the mRNA for AUG recognition. The eIF-3 complex is also required for disassembly and recycling of post-termination ribosomal complexes and subsequently prevents premature joining of the 40S and 60S ribosomal subunits prior to initiation. The eIF-3 complex specifically targets and initiates translation of a subset of mRNAs involved in cell proliferation, including cell cycling, differentiation and apoptosis, and uses different modes of RNA stem-loop binding to exert either translational activation or repression. The polypeptide is Eukaryotic translation initiation factor 3 subunit C (Eif3c) (Mus musculus (Mouse)).